Reading from the N-terminus, the 819-residue chain is Leucine--tRNA ligase (819 aa).

A 'HIGH' region motif is present at residues 51–61; that stretch reads PYPSGNLHIGH. Positions 586–590 match the 'KMSKS' region motif; it reads KMSKS. K589 provides a ligand contact to ATP.

This sequence belongs to the class-I aminoacyl-tRNA synthetase family.

The protein resides in the cytoplasm. It carries out the reaction tRNA(Leu) + L-leucine + ATP = L-leucyl-tRNA(Leu) + AMP + diphosphate. The polypeptide is Leucine--tRNA ligase (Deinococcus geothermalis (strain DSM 11300 / CIP 105573 / AG-3a)).